The following is a 104-amino-acid chain: Small ribosomal subunit protein uS10 (104 aa).

The protein belongs to the universal ribosomal protein uS10 family. As to quaternary structure, part of the 30S ribosomal subunit.

Involved in the binding of tRNA to the ribosomes. The protein is Small ribosomal subunit protein uS10 of Helicobacter pylori (strain J99 / ATCC 700824) (Campylobacter pylori J99).